The sequence spans 250 residues: MEWHDEGLIIGLRRYGETGAILEVFTPAHGRHFGLVRGGFGRRLRALLQPGNQADFTWRARLDQQLGLLAVEPTKLMTTRLFASGLALQGMNLIAALLRLLPERDPHPELYAVVRVLLEHLDEPAVAPILLARFELAMLTETGFGLDLSACAATGATQELIYVSPKSGRAVSARAGAPYHDKLLGLPPFFLDGSLLKNPTLEEVEAGFALTGHFLMRDLFGPRGQTLPDARHAFLAETAKTYPRVAPQCF.

The protein belongs to the RecO family.

Involved in DNA repair and RecF pathway recombination. This chain is DNA repair protein RecO, found in Beijerinckia indica subsp. indica (strain ATCC 9039 / DSM 1715 / NCIMB 8712).